The sequence spans 486 residues: Cardiolipin synthase A (486 aa).

The next 2 membrane-spanning stretches (helical) occupy residues 3-23 (IFYD…IANI) and 38-58 (MSWL…WFFF). 2 consecutive PLD phosphodiesterase domains span residues 219 to 246 (LDVR…VDPY) and 399 to 426 (KKGL…DMRS). Catalysis depends on residues His224, Lys226, Asp231, His404, Lys406, and Asp411.

This sequence belongs to the phospholipase D family. Cardiolipin synthase subfamily. ClsA sub-subfamily.

It localises to the cell inner membrane. It carries out the reaction 2 a 1,2-diacyl-sn-glycero-3-phospho-(1'-sn-glycerol) = a cardiolipin + glycerol. Its function is as follows. Catalyzes the reversible phosphatidyl group transfer from one phosphatidylglycerol molecule to another to form cardiolipin (CL) (diphosphatidylglycerol) and glycerol. This Buchnera aphidicola subsp. Schizaphis graminum (strain Sg) protein is Cardiolipin synthase A.